A 224-amino-acid polypeptide reads, in one-letter code: Artemin (224 aa).

A signal peptide spans 1–39; the sequence is MELGLAEPTALSHCLRPRWQSAWWPTLAVLALLSCVTEA. Residues 40 to 111 constitute a propeptide that is removed on maturation; that stretch reads SLDPMSRSPA…AALRGARAAR (72 aa). Residues 43–124 are disordered; that stretch reads PMSRSPAARD…RSSRARTTDA (82 aa). Pro residues predominate over residues 80–95; sequence RPPPQSPQPAPPPPGP. Over residues 96-116 the composition is skewed to low complexity; the sequence is ALQSPPAALRGARAARAGTRS. 3 cysteine pairs are disulfide-bonded: C127-C192, C154-C220, and C158-C222. N-linked (GlcNAc...) asparagine glycosylation occurs at N206.

The protein belongs to the TGF-beta family. GDNF subfamily. Homodimer; disulfide-linked. Interacts with GFRA3 coreceptor and RET: forms a 2:2:2 ternary complex composed of ARTN ligand, GFRA3 and RET receptor.

It is found in the secreted. In terms of biological role, growth factor that supports the survival of sensory and sympathetic peripheral neurons in culture and also supports the survival of dopaminergic neurons of the ventral mid-brain. Acts by binding to its coreceptor, GFRA3, leading to autophosphorylation and activation of the RET receptor. Strong attractant of gut hematopoietic cells thus promoting the formation Peyer's patch-like structures, a major component of the gut-associated lymphoid tissue. In Mus musculus (Mouse), this protein is Artemin.